A 1058-amino-acid polypeptide reads, in one-letter code: Carbamoyl phosphate synthase large chain (1058 aa).

Positions 1–401 (MPKRKDIQKI…SLLKACRSLE (401 aa)) are carboxyphosphate synthetic domain. ATP is bound by residues R129, R169, G175, G176, R208, I210, E215, G241, I242, H243, Q284, and E298. The 195-residue stretch at 133–327 (KQLMQELDQP…IAKLAAKIAV (195 aa)) folds into the ATP-grasp 1 domain. Q284, E298, and N300 together coordinate Mg(2+). The Mn(2+) site is built by Q284, E298, and N300. Positions 402–546 (IGVCHNEMTS…YSTYELENES (145 aa)) are oligomerization domain. Residues 547-929 (VQSNKESILV…ALYKAFEANN (383 aa)) form a carbamoyl phosphate synthetic domain region. In terms of domain architecture, ATP-grasp 2 spans 671–861 (EKALKELGIP…MAQIATKLIL (191 aa)). ATP-binding residues include R707, S746, I748, E752, G777, V778, H779, S780, Q820, and E832. 3 residues coordinate Mg(2+): Q820, E832, and N834. Mn(2+) is bound by residues Q820, E832, and N834. Residues 930–1058 (SHLSEFGQIV…ESRCFNIEAI (129 aa)) form the MGS-like domain. The tract at residues 930 to 1058 (SHLSEFGQIV…ESRCFNIEAI (129 aa)) is allosteric domain.

It belongs to the CarB family. In terms of assembly, composed of two chains; the small (or glutamine) chain promotes the hydrolysis of glutamine to ammonia, which is used by the large (or ammonia) chain to synthesize carbamoyl phosphate. Tetramer of heterodimers (alpha,beta)4. Requires Mg(2+) as cofactor. The cofactor is Mn(2+).

The catalysed reaction is hydrogencarbonate + L-glutamine + 2 ATP + H2O = carbamoyl phosphate + L-glutamate + 2 ADP + phosphate + 2 H(+). The enzyme catalyses hydrogencarbonate + NH4(+) + 2 ATP = carbamoyl phosphate + 2 ADP + phosphate + 2 H(+). It participates in amino-acid biosynthesis; L-arginine biosynthesis; carbamoyl phosphate from bicarbonate: step 1/1. Its pathway is pyrimidine metabolism; UMP biosynthesis via de novo pathway; (S)-dihydroorotate from bicarbonate: step 1/3. In terms of biological role, large subunit of the glutamine-dependent carbamoyl phosphate synthetase (CPSase). CPSase catalyzes the formation of carbamoyl phosphate from the ammonia moiety of glutamine, carbonate, and phosphate donated by ATP, constituting the first step of 2 biosynthetic pathways, one leading to arginine and/or urea and the other to pyrimidine nucleotides. The large subunit (synthetase) binds the substrates ammonia (free or transferred from glutamine from the small subunit), hydrogencarbonate and ATP and carries out an ATP-coupled ligase reaction, activating hydrogencarbonate by forming carboxy phosphate which reacts with ammonia to form carbamoyl phosphate. This Streptococcus pyogenes serotype M49 (strain NZ131) protein is Carbamoyl phosphate synthase large chain.